A 326-amino-acid chain; its full sequence is MQNGYSVSIQHYTAKTTAMKTLKIWRPIFQRWLGKKGPVDPRYVFSRPPNNKGQDGTHFFTNPQDDNGGDNSGAEGIGEAIAKQRRQKRTRFAYNLFWVSIAGVLGYSIGYKVIYKKEQSFLPLMPASRVHKLNDRDARRIGIDKIRVLSRLKVLEQLSQHEMIKEQYGVPLLNVNTHETPNVDELTVWCEDSDPCVTGLVLEPDDGRPTIHNWYRLPYVFKWRLTHRPINIHKTINDISQNLGLTLSDVFQIITPEKVYGSFKYEYPLTSDDHYTKIWFLGEMKLGDDSLIIYKGKFHRDVTLEQIHLLRRENGKLIRYILYKNE.

A mitochondrion-targeting transit peptide spans 1–40 (MQNGYSVSIQHYTAKTTAMKTLKIWRPIFQRWLGKKGPVD). Residues 47 to 75 (RPPNNKGQDGTHFFTNPQDDNGGDNSGAE) are disordered. Residues 48–65 (PPNNKGQDGTHFFTNPQD) show a composition bias toward polar residues. Residues 93-115 (AYNLFWVSIAGVLGYSIGYKVIY) form a helical membrane-spanning segment.

Belongs to the AIM39 family.

It localises to the mitochondrion membrane. This Zygosaccharomyces rouxii (strain ATCC 2623 / CBS 732 / NBRC 1130 / NCYC 568 / NRRL Y-229) protein is Altered inheritance of mitochondria protein 39, mitochondrial (AIM39).